Here is a 213-residue protein sequence, read N- to C-terminus: Uracil phosphoribosyltransferase (213 aa).

5-phospho-alpha-D-ribose 1-diphosphate contacts are provided by residues arginine 78, arginine 103, and 130–138 (DPMLATGGS). Residues isoleucine 193 and 198-200 (GDA) contribute to the uracil site. 5-phospho-alpha-D-ribose 1-diphosphate is bound at residue aspartate 199.

The protein belongs to the UPRTase family. Mg(2+) is required as a cofactor.

It catalyses the reaction UMP + diphosphate = 5-phospho-alpha-D-ribose 1-diphosphate + uracil. It participates in pyrimidine metabolism; UMP biosynthesis via salvage pathway; UMP from uracil: step 1/1. Allosterically activated by GTP. Its function is as follows. Catalyzes the conversion of uracil and 5-phospho-alpha-D-ribose 1-diphosphate (PRPP) to UMP and diphosphate. This Bordetella bronchiseptica (strain ATCC BAA-588 / NCTC 13252 / RB50) (Alcaligenes bronchisepticus) protein is Uracil phosphoribosyltransferase.